Consider the following 289-residue polypeptide: uncharacterized protein (289 aa).

Glu48 is a catalytic residue.

The protein belongs to the PhzF family.

This is an uncharacterized protein from Pasteurella multocida (strain Pm70).